Here is a 182-residue protein sequence, read N- to C-terminus: MRILGIDPGLQTTGFGVIDVDGHRLAYVASGTIRTTGIALGDLPGRLKLLFDGISEVASRYQPDTSAVEIVFVNVNPQSTLLLGQARGAALTALVNAGLPVAEYTALQMKKAMTGHGRAAKSQIQEMVRRLLQLPGLPGTDAADALGLAITHAHAGAAMSKMAEVTQLQRRQHAVYKGGRVY.

Catalysis depends on residues D7, E69, and D141. Residues D7, E69, and D141 each coordinate Mg(2+).

The protein belongs to the RuvC family. Homodimer which binds Holliday junction (HJ) DNA. The HJ becomes 2-fold symmetrical on binding to RuvC with unstacked arms; it has a different conformation from HJ DNA in complex with RuvA. In the full resolvosome a probable DNA-RuvA(4)-RuvB(12)-RuvC(2) complex forms which resolves the HJ. Requires Mg(2+) as cofactor.

The protein resides in the cytoplasm. It catalyses the reaction Endonucleolytic cleavage at a junction such as a reciprocal single-stranded crossover between two homologous DNA duplexes (Holliday junction).. The RuvA-RuvB-RuvC complex processes Holliday junction (HJ) DNA during genetic recombination and DNA repair. Endonuclease that resolves HJ intermediates. Cleaves cruciform DNA by making single-stranded nicks across the HJ at symmetrical positions within the homologous arms, yielding a 5'-phosphate and a 3'-hydroxyl group; requires a central core of homology in the junction. The consensus cleavage sequence is 5'-(A/T)TT(C/G)-3'. Cleavage occurs on the 3'-side of the TT dinucleotide at the point of strand exchange. HJ branch migration catalyzed by RuvA-RuvB allows RuvC to scan DNA until it finds its consensus sequence, where it cleaves and resolves the cruciform DNA. This Delftia acidovorans (strain DSM 14801 / SPH-1) protein is Crossover junction endodeoxyribonuclease RuvC.